The following is a 283-amino-acid chain: Putative pyruvate, phosphate dikinase regulatory protein (283 aa).

154-161 (GVSRTSKT) is a binding site for ADP.

The protein belongs to the pyruvate, phosphate/water dikinase regulatory protein family. PDRP subfamily.

It catalyses the reaction N(tele)-phospho-L-histidyl/L-threonyl-[pyruvate, phosphate dikinase] + ADP = N(tele)-phospho-L-histidyl/O-phospho-L-threonyl-[pyruvate, phosphate dikinase] + AMP + H(+). The catalysed reaction is N(tele)-phospho-L-histidyl/O-phospho-L-threonyl-[pyruvate, phosphate dikinase] + phosphate + H(+) = N(tele)-phospho-L-histidyl/L-threonyl-[pyruvate, phosphate dikinase] + diphosphate. Functionally, bifunctional serine/threonine kinase and phosphorylase involved in the regulation of the pyruvate, phosphate dikinase (PPDK) by catalyzing its phosphorylation/dephosphorylation. This Afipia carboxidovorans (strain ATCC 49405 / DSM 1227 / KCTC 32145 / OM5) (Oligotropha carboxidovorans) protein is Putative pyruvate, phosphate dikinase regulatory protein.